A 340-amino-acid chain; its full sequence is GTP 3',8-cyclase (340 aa).

The region spanning 8–227 (KLGRPIRDLR…TMIEQHFEID (220 aa)) is the Radical SAM core domain. Arg-17 is a binding site for GTP. Positions 24 and 28 each coordinate [4Fe-4S] cluster. Tyr-30 serves as a coordination point for S-adenosyl-L-methionine. Cys-31 is a [4Fe-4S] cluster binding site. Residue Arg-71 coordinates GTP. Gly-75 is a binding site for S-adenosyl-L-methionine. Thr-102 provides a ligand contact to GTP. S-adenosyl-L-methionine is bound at residue Ser-126. Residue Lys-163 coordinates GTP. Met-197 contributes to the S-adenosyl-L-methionine binding site. Residues Cys-261 and Cys-264 each contribute to the [4Fe-4S] cluster site. 266-268 (RAR) serves as a coordination point for GTP. Cys-278 contributes to the [4Fe-4S] cluster binding site.

The protein belongs to the radical SAM superfamily. MoaA family. As to quaternary structure, monomer and homodimer. Requires [4Fe-4S] cluster as cofactor.

The enzyme catalyses GTP + AH2 + S-adenosyl-L-methionine = (8S)-3',8-cyclo-7,8-dihydroguanosine 5'-triphosphate + 5'-deoxyadenosine + L-methionine + A + H(+). Its pathway is cofactor biosynthesis; molybdopterin biosynthesis. In terms of biological role, catalyzes the cyclization of GTP to (8S)-3',8-cyclo-7,8-dihydroguanosine 5'-triphosphate. This chain is GTP 3',8-cyclase, found in Staphylococcus aureus (strain USA300).